Reading from the N-terminus, the 197-residue chain is MPQTILPISVGQMVLICIFILIILFVITKAKGIKGSWSKKSEIDPFINHSLSFYVPEEDELKDSEGERICRKFLRETVGVLFKDRDGNPEPFNKARPDFLKNPVTSGKNGNFNLEIDCYSPKLKLGVEYNGAQHYKFIPHFHKNKEAFRNQQYRDELKRRMCNDNNVTLIEVPYTVKDIPTYLYNKLKPLGYLNSLQ.

Residues 7 to 27 form a helical membrane-spanning segment; that stretch reads PISVGQMVLICIFILIILFVI.

The protein belongs to the IIV-6 307L family.

It localises to the membrane. This is an uncharacterized protein from Acheta domesticus (House cricket).